The chain runs to 561 residues: Putative transport protein YbjL (561 aa).

5 helical membrane passes run 8–28 (LLNG…LCLG), 32–52 (LGSV…LLGQ), 66–86 (FMLF…SIFF), 94–114 (MLAL…GKLF), and 158–178 (NLSL…IVGA). RCK C-terminal domains are found at residues 200–288 (RGLD…SFRN) and 292–373 (VFDR…RIGF). 5 helical membrane passes run 383 to 403 (LLAF…TFQF), 406 to 426 (FSFG…LGFL), 447 to 467 (FGLM…ISNG), 475 to 495 (MLIA…LFGA), and 540 to 560 (AIAN…WPGL).

This sequence belongs to the AAE transporter (TC 2.A.81) family. YbjL subfamily.

It is found in the cell membrane. This Salmonella agona (strain SL483) protein is Putative transport protein YbjL.